The following is a 385-amino-acid chain: Multidrug resistance protein MdtE (385 aa).

Positions 1-20 (MNRRRKLLIPLLFCGAMLTA) are cleaved as a signal peptide. A lipid anchor (N-palmitoyl cysteine) is attached at C21. C21 carries the S-diacylglycerol cysteine lipid modification.

This sequence belongs to the membrane fusion protein (MFP) (TC 8.A.1) family. In terms of assembly, homotrimer. Part of the tripartite efflux system MdtEF-TolC, which is composed of an inner membrane transporter, MdtF, a membrane fusion protein, MdtE, and an outer membrane component, TolC. The complex forms a large protein conduit and can translocate molecules across both the inner and outer membranes.

It localises to the cell inner membrane. Functionally, part of the tripartite efflux system MdtEF-TolC, which confers resistance to compounds such as rhodamine 6G, erythromycin, doxorubicin, ethidium bromide, TPP, SDS, deoxycholate, crystal violet and benzalkonium. The protein is Multidrug resistance protein MdtE (mdtE) of Escherichia coli (strain K12).